Here is a 293-residue protein sequence, read N- to C-terminus: Fructose-bisphosphate aldolase (293 aa).

Serine 50 lines the D-glyceraldehyde 3-phosphate pocket. Aspartate 85 (proton donor) is an active-site residue. Residues histidine 86, aspartate 106, glutamate 136, and histidine 178 each contribute to the Zn(2+) site. Glycine 179 contributes to the dihydroxyacetone phosphate binding site. Histidine 208 contributes to the Zn(2+) binding site. Dihydroxyacetone phosphate is bound by residues 209 to 211 and 230 to 233; these read GGS and NVNT.

It belongs to the class II fructose-bisphosphate aldolase family. Requires Zn(2+) as cofactor.

It catalyses the reaction beta-D-fructose 1,6-bisphosphate = D-glyceraldehyde 3-phosphate + dihydroxyacetone phosphate. It participates in carbohydrate degradation; glycolysis; D-glyceraldehyde 3-phosphate and glycerone phosphate from D-glucose: step 4/4. Its function is as follows. Catalyzes the aldol condensation of dihydroxyacetone phosphate (DHAP or glycerone-phosphate) with glyceraldehyde 3-phosphate (G3P) to form fructose 1,6-bisphosphate (FBP) in gluconeogenesis and the reverse reaction in glycolysis. This is Fructose-bisphosphate aldolase (fba) from Streptococcus pneumoniae serotype 4 (strain ATCC BAA-334 / TIGR4).